Consider the following 306-residue polypeptide: MDFVNHLNDRLLFAVPKKGRLYEKTKQLLNGSDIKFNRSNRLDIALCTTLPIALIFLPAADIPTFVGEGKCDLGITGLDQVKESGIEEIDLLMDLGFGGCKLQVQVPEKDRKYTDPKQLVGKTIVSSFVKLSRDYFQQLEEEVLGKPVDKLSTKIKYVGGSVEASCALGVGDAIVDLVESGETMRAAGLIDIATVLETSAYLIQARRPQQDKSREELIEVIKSRIQGVLTAQRYVCCSYNTPEGNLKELLKVTPGRRAPTISKLDDDGWVAVNSMIERKRKADIMDELKRKGASDIMVFEISNCRV.

The protein belongs to the ATP phosphoribosyltransferase family.

Its subcellular location is the cytoplasm. The enzyme catalyses 1-(5-phospho-beta-D-ribosyl)-ATP + diphosphate = 5-phospho-alpha-D-ribose 1-diphosphate + ATP. It participates in amino-acid biosynthesis; L-histidine biosynthesis; L-histidine from 5-phospho-alpha-D-ribose 1-diphosphate: step 1/9. Its function is as follows. Catalyzes the condensation of ATP and 5-phosphoribose 1-diphosphate to form N'-(5'-phosphoribosyl)-ATP (PR-ATP). Has a crucial role in the pathway because the rate of histidine biosynthesis seems to be controlled primarily by regulation of the enzymatic activity. The sequence is that of ATP phosphoribosyltransferase (HIS1) from Candida glabrata (strain ATCC 2001 / BCRC 20586 / JCM 3761 / NBRC 0622 / NRRL Y-65 / CBS 138) (Yeast).